We begin with the raw amino-acid sequence, 298 residues long: MACHNVSELQDLGCSNQLLLQPLWDSIRTGEASARSPFFPVIFSIFTYLGFCLPFVVLDVLCPWVPILRRYKIHPDFSPSVRQLLPCLGLTLYQHLVFVFPVTLMHWARSPALLPREAPELSQLLSHVLICLLLFDTEIFAWHLLHHKVPWLYRTFHKVHHQNSSSFALATQYMSVWELLSLTFFDVLNVAMLQCHPLTILVFHVVNIWLSVEDHSGYDFPWSTHRLVPFGWYGGVAHHDLHHSQFNCNFAPYFTHWDKMLGTLRCAPHSKRLCAGSESCLDSGEQCTVHLNQKKKQT.

Asn-5 carries N-linked (GlcNAc...) asparagine glycosylation. The next 3 helical transmembrane spans lie at 38 to 58 (FFPV…FVVL), 84 to 104 (LLPC…PVTL), and 124 to 144 (LLSH…AWHL). The Fatty acid hydroxylase domain maps to 128–263 (VLICLLLFDT…FTHWDKMLGT (136 aa)). The short motif at 142–146 (WHLLH) is the Histidine box-1 element. The short motif at 157-161 (HKVHH) is the Histidine box-2 element. A glycan (N-linked (GlcNAc...) asparagine) is linked at Asn-163. 2 consecutive transmembrane segments (helical) span residues 167–187 (FALA…FFDV) and 190–210 (VAML…NIWL). Residues 238–244 (HHDLHHS) carry the Histidine box-3 motif.

This sequence belongs to the sterol desaturase family. It depends on Fe cation as a cofactor. In terms of processing, N-glycosylated. In terms of tissue distribution, expressed in testicular macrophages at all stages, with the highest level in 10 day old animals.

It localises to the endoplasmic reticulum membrane. It carries out the reaction cholesterol + AH2 + O2 = 25-hydroxycholesterol + A + H2O. The catalysed reaction is cholesterol + NADPH + O2 + H(+) = 25-hydroxycholesterol + NADP(+) + H2O. In terms of biological role, catalyzes the formation of 25-hydroxycholesterol from cholesterol, leading to repress cholesterol biosynthetic enzymes. Plays a key role in cell positioning and movement in lymphoid tissues: 25-hydroxycholesterol is an intermediate in biosynthesis of 7-alpha,25-dihydroxycholesterol (7-alpha,25-OHC), an oxysterol that acts as a ligand for the G protein-coupled receptor GPR183/EBI2, a chemotactic receptor for a number of lymphoid cells. May play an important role in regulating lipid metabolism by synthesizing a corepressor that blocks sterol regulatory element binding protein (SREBP) processing. In testis, production of 25-hydroxycholesterol by macrophages plays a role in Leydig cell differentiation. Required to restrain inflammation in macrophages: production of 25-hydroxycholesterol protects macrophages from cholesterol overload, thereby preventing mitochondrial DNA release and subsequent activation of the AIM2 inflammasome. Interferon-stimulated gene which has broad antiviral activities against a wide range of enveloped viruses. Catalyzes the formation of 25-hydroxycholesterol from cholesterol, leading to repress cholesterol biosynthetic enzymes. Plays a key role in cell positioning and movement in lymphoid tissues: 25-hydroxycholesterol is an intermediate in biosynthesis of 7-alpha,25-dihydroxycholesterol (7-alpha,25-OHC), an oxysterol that acts as a ligand for the G protein-coupled receptor GPR183/EBI2, a chemotactic receptor for a number of lymphoid cells. May play an important role in regulating lipid metabolism by synthesizing a corepressor that blocks sterol regulatory element binding protein (SREBP) processing. As an interferon-stimulated gene, has broad antiviral activities against a wide range of enveloped viruses. Its product, 25-hydroxycholesterol, activates the ER-localized enzyme ACAT to induce internalization of accessible cholesterol on the plasma membrane and restricts virus-host membranes fusion which inhibits virus replication. In testis, production of 25-hydroxycholesterol by macrophages plays a role in Leydig cell differentiation. This chain is Cholesterol 25-hydroxylase, found in Rattus norvegicus (Rat).